A 318-amino-acid polypeptide reads, in one-letter code: 2-keto-3-deoxygluconate permease (318 aa).

Transmembrane regions (helical) follow at residues 10–30, 42–62, 76–96, 105–125, 139–159, 163–183, 199–219, 224–244, 263–283, and 289–309; these read IPGG…TFTP, GLIT…GASI, VLVV…GTFL, MLAG…NGGL, AGAF…VILG, IATF…IGFA, VQTL…LSVI, FAGI…LILA, AGAA…FAPV, and ALVA…TALW.

The protein belongs to the KdgT transporter family.

The protein resides in the cell inner membrane. It catalyses the reaction 2-dehydro-3-deoxy-D-gluconate(in) + H(+)(in) = 2-dehydro-3-deoxy-D-gluconate(out) + H(+)(out). Catalyzes the proton-dependent uptake of 2-keto-3-deoxygluconate (KDG) into the cell. The protein is 2-keto-3-deoxygluconate permease of Pectobacterium carotovorum subsp. carotovorum (Erwinia carotovora subsp. carotovora).